A 227-amino-acid chain; its full sequence is Lipoprotein-releasing system ATP-binding protein LolD (227 aa).

The region spanning 6–227 (LVLDDIQKSY…RLDEGVLVSA (222 aa)) is the ABC transporter domain. An ATP-binding site is contributed by 43-50 (APSGAGKS).

The protein belongs to the ABC transporter superfamily. Lipoprotein translocase (TC 3.A.1.125) family. The complex is composed of two ATP-binding proteins (LolD) and two transmembrane proteins (LolC and LolE).

The protein resides in the cell inner membrane. Part of the ABC transporter complex LolCDE involved in the translocation of mature outer membrane-directed lipoproteins, from the inner membrane to the periplasmic chaperone, LolA. Responsible for the formation of the LolA-lipoprotein complex in an ATP-dependent manner. In Jannaschia sp. (strain CCS1), this protein is Lipoprotein-releasing system ATP-binding protein LolD.